The primary structure comprises 282 residues: Shikimate dehydrogenase (NADP(+)) (282 aa).

Residues serine 15–serine 17 and threonine 62 contribute to the shikimate site. Lysine 66 (proton acceptor) is an active-site residue. Residues asparagine 87 and aspartate 103 each contribute to the shikimate site. NADP(+) is bound by residues glycine 127–alanine 131, asparagine 151–lysine 156, and methionine 220. Tyrosine 222 serves as a coordination point for shikimate. Residue glycine 244 coordinates NADP(+).

This sequence belongs to the shikimate dehydrogenase family. In terms of assembly, homodimer.

The enzyme catalyses shikimate + NADP(+) = 3-dehydroshikimate + NADPH + H(+). The protein operates within metabolic intermediate biosynthesis; chorismate biosynthesis; chorismate from D-erythrose 4-phosphate and phosphoenolpyruvate: step 4/7. Its function is as follows. Involved in the biosynthesis of the chorismate, which leads to the biosynthesis of aromatic amino acids. Catalyzes the reversible NADPH linked reduction of 3-dehydroshikimate (DHSA) to yield shikimate (SA). The polypeptide is Shikimate dehydrogenase (NADP(+)) (Shewanella baltica (strain OS185)).